We begin with the raw amino-acid sequence, 204 residues long: Inner membrane-spanning protein YciB (204 aa).

Helical transmembrane passes span Ala3–Phe23, Ile45–Ile65, Leu70–Trp90, Leu107–Phe127, Trp145–Thr165, and Trp168–Met188.

Belongs to the YciB family.

The protein resides in the cell inner membrane. Its function is as follows. Plays a role in cell envelope biogenesis, maintenance of cell envelope integrity and membrane homeostasis. This is Inner membrane-spanning protein YciB from Agrobacterium fabrum (strain C58 / ATCC 33970) (Agrobacterium tumefaciens (strain C58)).